Consider the following 552-residue polypeptide: Formate--tetrahydrofolate ligase (552 aa).

65 to 72 (TPAGEGKT) contributes to the ATP binding site.

The protein belongs to the formate--tetrahydrofolate ligase family.

It catalyses the reaction (6S)-5,6,7,8-tetrahydrofolate + formate + ATP = (6R)-10-formyltetrahydrofolate + ADP + phosphate. It participates in one-carbon metabolism; tetrahydrofolate interconversion. The protein is Formate--tetrahydrofolate ligase of Fervidobacterium nodosum (strain ATCC 35602 / DSM 5306 / Rt17-B1).